We begin with the raw amino-acid sequence, 276 residues long: MLIKFTKMHGLGNDFMVVDLISQHAHFRPEQVRRLADRNFGVGFDQLLIVEPPGRPDADFRYRIFNADGSEVEQCGNGARCFARFVKENRLTNKKNIRVETKKGIIELIVNKDGLVTVDMGAPRLAPADIPFVAETQEAIYPIEVNGVMYEISAVSMGNPHGVLVVDDVNKAPVHKLGKALENHPRFPERANIGFLQVVHRRFAKLRVFERGAGETLACGTGACAAVVAGRLRGLLDRKVEIKLPGGNLKISWEGEGHPVMMTGPAVRVFDGQVRI.

3 residues coordinate substrate: asparagine 13, glutamine 46, and asparagine 66. Cysteine 75 functions as the Proton donor in the catalytic mechanism. Residues 76-77, asparagine 159, asparagine 192, and 210-211 each bind substrate; these read GN and ER. Cysteine 219 serves as the catalytic Proton acceptor. Residue 220–221 coordinates substrate; the sequence is GT.

Belongs to the diaminopimelate epimerase family. As to quaternary structure, homodimer.

The protein localises to the cytoplasm. The catalysed reaction is (2S,6S)-2,6-diaminopimelate = meso-2,6-diaminopimelate. It participates in amino-acid biosynthesis; L-lysine biosynthesis via DAP pathway; DL-2,6-diaminopimelate from LL-2,6-diaminopimelate: step 1/1. Catalyzes the stereoinversion of LL-2,6-diaminopimelate (L,L-DAP) to meso-diaminopimelate (meso-DAP), a precursor of L-lysine and an essential component of the bacterial peptidoglycan. This chain is Diaminopimelate epimerase, found in Hahella chejuensis (strain KCTC 2396).